A 301-amino-acid polypeptide reads, in one-letter code: Acetylglutamate kinase (301 aa).

Substrate is bound by residues 68–69 (GG), Arg90, and Asn195.

Belongs to the acetylglutamate kinase family. ArgB subfamily.

The protein resides in the cytoplasm. The catalysed reaction is N-acetyl-L-glutamate + ATP = N-acetyl-L-glutamyl 5-phosphate + ADP. The protein operates within amino-acid biosynthesis; L-arginine biosynthesis; N(2)-acetyl-L-ornithine from L-glutamate: step 2/4. Catalyzes the ATP-dependent phosphorylation of N-acetyl-L-glutamate. This chain is Acetylglutamate kinase, found in Pseudomonas savastanoi pv. phaseolicola (strain 1448A / Race 6) (Pseudomonas syringae pv. phaseolicola (strain 1448A / Race 6)).